The sequence spans 510 residues: ATP synthase subunit alpha (510 aa).

An ATP-binding site is contributed by 169–176; that stretch reads GDRQTGKT.

It belongs to the ATPase alpha/beta chains family. F-type ATPases have 2 components, CF(1) - the catalytic core - and CF(0) - the membrane proton channel. CF(1) has five subunits: alpha(3), beta(3), gamma(1), delta(1), epsilon(1). CF(0) has three main subunits: a(1), b(2) and c(9-12). The alpha and beta chains form an alternating ring which encloses part of the gamma chain. CF(1) is attached to CF(0) by a central stalk formed by the gamma and epsilon chains, while a peripheral stalk is formed by the delta and b chains.

Its subcellular location is the cell inner membrane. The catalysed reaction is ATP + H2O + 4 H(+)(in) = ADP + phosphate + 5 H(+)(out). Its function is as follows. Produces ATP from ADP in the presence of a proton gradient across the membrane. The alpha chain is a regulatory subunit. The protein is ATP synthase subunit alpha of Rickettsia felis (strain ATCC VR-1525 / URRWXCal2) (Rickettsia azadi).